The chain runs to 331 residues: Aspartate carbamoyltransferase catalytic subunit (331 aa).

Carbamoyl phosphate is bound by residues Arg62 and Thr63. Lys90 serves as a coordination point for L-aspartate. Carbamoyl phosphate-binding residues include Arg112, His145, and Gln148. Residues Arg185 and Arg246 each contribute to the L-aspartate site. Residues Gly287 and Pro288 each coordinate carbamoyl phosphate.

This sequence belongs to the aspartate/ornithine carbamoyltransferase superfamily. ATCase family. Heterododecamer (2C3:3R2) of six catalytic PyrB chains organized as two trimers (C3), and six regulatory PyrI chains organized as three dimers (R2).

The catalysed reaction is carbamoyl phosphate + L-aspartate = N-carbamoyl-L-aspartate + phosphate + H(+). The protein operates within pyrimidine metabolism; UMP biosynthesis via de novo pathway; (S)-dihydroorotate from bicarbonate: step 2/3. In terms of biological role, catalyzes the condensation of carbamoyl phosphate and aspartate to form carbamoyl aspartate and inorganic phosphate, the committed step in the de novo pyrimidine nucleotide biosynthesis pathway. The sequence is that of Aspartate carbamoyltransferase catalytic subunit from Synechocystis sp. (strain ATCC 27184 / PCC 6803 / Kazusa).